We begin with the raw amino-acid sequence, 498 residues long: MGEKQQPSMNDQLRVRREKMQELRDKGIDPFGHRFERTHLAAQLHEKYSDMTKEELDEQGVVATIAGRMISKRGKGKVGFADLKDRSGKMQLYVRKDVLGEDVYKVFKRSDIGDFLGVTGDVMKTDMGELTIKVTGLTFLSKALRPLPDKFHGLQNVEQIYRQRYLDLIANDDSMDRFRKRTKIVSAVRRYLDGNDFAEVETPVLHTQAGGASARPFITHHNALDINLYLRIALELHLKRLIVGGMERVYEIGRVFRNEGIDTRHNPEFTMLETYAAYFDFHDVMDETEGIFKAAVAAVSDDGKITYQGTELDLGQDFERLHMVDAIKKYAGVDFWPKMSVEDAKKLADENGIHYESWWTVGHIINEFFEEKVQDQLKQPVFIYGHPVEISPLAKKNAEDDRFTDRFELYILGNEYGNAFTELNDPIDQRARFEAQVAEREAGNDEAEGIDEDYIEALEYGMPPTGGLGIGIDRLVMLLTDAPSIRDVLLFPTMKPID.

Mg(2+)-binding residues include E408 and E415.

The protein belongs to the class-II aminoacyl-tRNA synthetase family. As to quaternary structure, homodimer. Mg(2+) is required as a cofactor.

Its subcellular location is the cytoplasm. It catalyses the reaction tRNA(Lys) + L-lysine + ATP = L-lysyl-tRNA(Lys) + AMP + diphosphate. This Pediococcus pentosaceus (strain ATCC 25745 / CCUG 21536 / LMG 10740 / 183-1w) protein is Lysine--tRNA ligase.